The chain runs to 216 residues: Ras-related protein Rab-5C (216 aa).

GTP-binding residues include serine 30, alanine 31, glycine 33, lysine 34, serine 35, serine 36, histidine 47, glutamate 48, threonine 53, and glycine 79. Residue serine 35 participates in Mg(2+) binding. 2 short sequence motifs (switch) span residues glutamine 45–alanine 57 and alanine 78–alanine 94. Threonine 53 is a binding site for Mg(2+). Serine 85 bears the Phosphoserine mark. 5 residues coordinate GTP: asparagine 134, lysine 135, aspartate 137, alanine 165, and lysine 166. The segment at asparagine 185–asparagine 216 is disordered. The span at glutamine 203–asparagine 216 shows a compositional bias: polar residues. S-geranylgeranyl cysteine attachment occurs at residues cysteine 213 and cysteine 214.

Belongs to the small GTPase superfamily. Rab family. Interacts with EEA1 and INCA1. Interacts with GDI1, GDI2, CHML and CHM; phosphorylation at Ser-85 disrupts this interaction. The cofactor is Mg(2+). Post-translationally, phosphorylation of Ser-85 in the switch II region by LRRK2 prevents the association of RAB regulatory proteins, including CHM, CHML and RAB GDP dissociation inhibitors GDI1 and GDI2.

The protein resides in the cell membrane. It localises to the early endosome membrane. Its subcellular location is the melanosome. The catalysed reaction is GTP + H2O = GDP + phosphate + H(+). Its activity is regulated as follows. Regulated by guanine nucleotide exchange factors (GEFs) which promote the exchange of bound GDP for free GTP. Regulated by GTPase activating proteins (GAPs) which increase the GTP hydrolysis activity. Inhibited by GDP dissociation inhibitors (GDIs). Its function is as follows. The small GTPases Rab are key regulators of intracellular membrane trafficking, from the formation of transport vesicles to their fusion with membranes. Rabs cycle between an inactive GDP-bound form and an active GTP-bound form that is able to recruit to membranes different sets of downstream effectors directly responsible for vesicle formation, movement, tethering and fusion. The sequence is that of Ras-related protein Rab-5C from Mus musculus (Mouse).